Reading from the N-terminus, the 315-residue chain is Acetyl-coenzyme A carboxylase carboxyl transferase subunit alpha (315 aa).

In terms of domain architecture, CoA carboxyltransferase C-terminal spans 39–292 (LEDKSAKLLR…GDALEQELNG (254 aa)).

It belongs to the AccA family. Acetyl-CoA carboxylase is a heterohexamer composed of biotin carboxyl carrier protein (AccB), biotin carboxylase (AccC) and two subunits each of ACCase subunit alpha (AccA) and ACCase subunit beta (AccD).

It localises to the cytoplasm. The catalysed reaction is N(6)-carboxybiotinyl-L-lysyl-[protein] + acetyl-CoA = N(6)-biotinyl-L-lysyl-[protein] + malonyl-CoA. Its pathway is lipid metabolism; malonyl-CoA biosynthesis; malonyl-CoA from acetyl-CoA: step 1/1. Functionally, component of the acetyl coenzyme A carboxylase (ACC) complex. First, biotin carboxylase catalyzes the carboxylation of biotin on its carrier protein (BCCP) and then the CO(2) group is transferred by the carboxyltransferase to acetyl-CoA to form malonyl-CoA. This is Acetyl-coenzyme A carboxylase carboxyl transferase subunit alpha from Sphingopyxis alaskensis (strain DSM 13593 / LMG 18877 / RB2256) (Sphingomonas alaskensis).